A 925-amino-acid polypeptide reads, in one-letter code: Serine/threonine-protein phosphatase 1 regulatory subunit 10 (925 aa).

An interaction with TOX4 region spans residues 1-348; the sequence is MGSGPIDPKE…EPAPPSEAMD (348 aa). One can recognise a TFIIS N-terminal domain in the interval 73–147; it reads KLLNNWLTYS…SDWMAVIRSQ (75 aa). The tract at residues 147–211 is disordered; it reads QSSTQPAEKD…APSHAKFRST (65 aa). Basic and acidic residues-rich tracts occupy residues 153–166 and 174–196; these read AEKD…EGKS and PLTE…EKPK. Glycyl lysine isopeptide (Lys-Gly) (interchain with G-Cter in SUMO2) cross-links involve residues Lys179 and Lys262. 3 disordered regions span residues 304-398, 536-555, and 587-890; these read KIKK…KRKT, TLEP…SKLP, and SIMG…HGGD. At Ser313 the chain carries Phosphoserine. Over residues 325–336 the composition is skewed to low complexity; it reads KTSTEPSTAKPS. The necessary for interaction with PPP1CA stretch occupies residues 357–433; the sequence is PPVEVPELMD…NKIKDFGEAA (77 aa). A Phosphoserine modification is found at Ser382. Positions 393–408 are necessary for interaction with PPP1CC; the sequence is GRKRKTVTWPEEGKLR. A PP1-binding motif motif is present at residues 394-423; sequence RKRKTVTWPEEGKLREYFYFELDETERVNV. Position 398 is a phosphothreonine; by PKA (Thr398). The segment at 418-619 is interaction with WDR82; sequence TERVNVNKIK…IKQMLVPHGL (202 aa). Residues 540–551 are compositionally biased toward gly residues; the sequence is GGAGGSPDGAGG. A phosphoserine mark is found at Ser545 and Ser591. Residues 596 to 611 show a composition bias toward basic and acidic residues; that stretch reads PSEELLKQPDYSDKIK. A compositionally biased stretch (pro residues) spans 644–655; the sequence is PPGPGGPMPGPH. Positions 656-665 are enriched in gly residues; sequence GGPGGPGGPV. Arg668 bears the Omega-N-methylarginine mark. Low complexity predominate over residues 679 to 693; it reads GDPFWDGPGDPMRGG. Omega-N-methylarginine occurs at positions 696 and 741. Composition is skewed to gly residues over residues 728–766 and 775–829; these read ARGG…GMSS and GPGG…AGGG. Composition is skewed to basic and acidic residues over residues 846-871 and 879-890; these read PHDV…HDGP and RGHDGGHNHGGD. Residues 891–919 form a C3H1-type zinc finger; that stretch reads MSKRPVCRHFMMKGNCRYENNCAFYHPGV.

As to quaternary structure, component of the PNUTS-PP1 complex (also named PTW/PP1 complex), composed of PPP1R10/PNUTS, TOX4, WDR82, and PPP1CA (or PPP1CB or PPP1CC). Post-translationally, phosphorylated on Ser-398 by PKA within the region necessary for interaction with PPP1CA.

It is found in the nucleus. The protein localises to the chromosome. Substrate-recognition component of the PNUTS-PP1 protein phosphatase complex, a protein phosphatase 1 (PP1) complex that promotes RNA polymerase II transcription pause-release, allowing transcription elongation. Promoter-proximal pausing by RNA polymerase II is a transcription halt following transcription initiation but prior to elongation, which acts as a checkpoint to control that transcripts are favorably configured for transcriptional elongation. The PNUTS-PP1 complex mediates the release of RNA polymerase II from promoter-proximal region of genes by catalyzing dephosphorylation of proteins involved in transcription, such as AFF4, CDK9, MEPCE, INTS12, NCBP1, POLR2M/GDOWN1 and SUPT6H. The PNUTS-PP1 complex also regulates RNA polymerase II transcription termination by mediating dephosphorylation of SUPT5H in termination zones downstream of poly(A) sites, thereby promoting deceleration of RNA polymerase II transcription. PNUTS-PP1 complex is also involved in the response to replication stress by mediating dephosphorylation of POLR2A at 'Ser-5' of the CTD, promoting RNA polymerase II degradation. The PNUTS-PP1 complex also plays a role in the control of chromatin structure and cell cycle progression during the transition from mitosis into interphase. PNUTS-PP1 complex mediates dephosphorylation of MYC, promoting MYC stability by preventing MYC ubiquitination by the SCF(FBXW7) complex. In addition to acts as a substrate-recognition component, PPP1R10/PNUTS also acts as a nuclear targeting subunit for the PNUTS-PP1 complex. In some context, PPP1R10/PNUTS also acts as an inhibitor of protein phosphatase 1 (PP1) activity by preventing access to substrates, such as RB. This is Serine/threonine-protein phosphatase 1 regulatory subunit 10 (PPP1R10) from Sus scrofa (Pig).